The following is a 185-amino-acid chain: Ribosome-recycling factor (185 aa).

The protein belongs to the RRF family.

It localises to the cytoplasm. Functionally, responsible for the release of ribosomes from messenger RNA at the termination of protein biosynthesis. May increase the efficiency of translation by recycling ribosomes from one round of translation to another. This chain is Ribosome-recycling factor, found in Corynebacterium jeikeium (strain K411).